The primary structure comprises 949 residues: Protocadherin alpha-11 (949 aa).

The N-terminal stretch at 1 to 29 (MFGFQRRGLGTPRLQLWLLLLEFWEVGSG) is a signal peptide. 6 consecutive Cadherin domains span residues 30-133 (QLHY…PPVF), 157-242 (ASDA…DPEF), 243-349 (DKSE…SPEV), 350-454 (AVTS…APAF), 455-564 (AQPE…APAL), and 580-677 (VPRS…APKA). Over 30 to 696 (QLHYSVSEEA…SPEAALVDVN (667 aa)) the chain is Extracellular. 2 N-linked (GlcNAc...) asparagine glycosylation sites follow: asparagine 265 and asparagine 304. Residue asparagine 547 is glycosylated (N-linked (GlcNAc...) asparagine). A helical transmembrane segment spans residues 697-717 (VYLIIAICVVSSLLVLTLLLY). Topologically, residues 718-949 (TALWWSATPT…GNSTTDNSDQ (232 aa)) are cytoplasmic. 2 PXXP repeats span residues 733–736 (PGKP) and 773–776 (PSLP). The tract at residues 733–893 (PGKPTLVCSR…PDKFIIPGSP (161 aa)) is 6 X 4 AA repeats of P-X-X-P. 2 disordered regions span residues 753-807 (RRQR…DWRY) and 826-949 (ILRA…NSDQ). Over residues 780–789 (NKEEEGERQE) the composition is skewed to basic and acidic residues. PXXP repeat units follow at residues 795-798 (PGQP), 831-834 (PGGP), 872-875 (PGNP), and 890-893 (PGSP). The segment covering 908–922 (DKSDFITFGKKEETK) has biased composition (basic and acidic residues).

It localises to the cell membrane. Its function is as follows. Potential calcium-dependent cell-adhesion protein. May be involved in the establishment and maintenance of specific neuronal connections in the brain. This chain is Protocadherin alpha-11 (PCDHA11), found in Homo sapiens (Human).